The sequence spans 221 residues: Flagellar L-ring protein 1 (221 aa).

A signal peptide spans 1–16 (MKRFLILTPMVLALCG). The N-palmitoyl cysteine moiety is linked to residue cysteine 17. Cysteine 17 carries S-diacylglycerol cysteine lipidation.

This sequence belongs to the FlgH family. In terms of assembly, the basal body constitutes a major portion of the flagellar organelle and consists of four rings (L,P,S, and M) mounted on a central rod.

The protein resides in the cell outer membrane. It localises to the bacterial flagellum basal body. In terms of biological role, assembles around the rod to form the L-ring and probably protects the motor/basal body from shearing forces during rotation. In Yersinia pestis, this protein is Flagellar L-ring protein 1.